A 1347-amino-acid polypeptide reads, in one-letter code: Protocadherin-11 X-linked (1347 aa).

Residues 1–23 (MDLLSGTYIFAVLLACVVFHSGA) form the signal peptide. Residues 24 to 812 (QEKNYTIREE…VSSPTSDYVK (789 aa)) lie on the Extracellular side of the membrane. Cadherin domains lie at 26-139 (KNYT…APLF), 140-249 (PATV…HPVF), 250-355 (KETE…VPSI), 362-466 (NPIN…APVF), 467-570 (TQSF…SPVF), 571-673 (THNE…KPVF), and 677-795 (PSNY…APVT). N-linked (GlcNAc...) asparagine glycans are attached at residues Asn27, Asn48, and Asn54. Asn344 carries an N-linked (GlcNAc...) asparagine glycan. Asn553 carries N-linked (GlcNAc...) asparagine glycosylation. Asn773 is a glycosylation site (N-linked (GlcNAc...) asparagine). A helical membrane pass occupies residues 813 to 833 (ILVAAVAGTVTVVVVIFITAV). The Cytoplasmic segment spans residues 834–1347 (VRCRQAPHLK…DSPIMEEHPL (514 aa)). Disordered stretches follow at residues 1031–1050 (IWIHPQPQRKSEGKGAGKSQ), 1057–1091 (LPEGSQESSSDGGLGEHDAGSLTSTSHGLPLGYPQ), 1097–1116 (RATPSNRTEGDGNSDPESTF), and 1325–1347 (TFTPRQQARPSRGDSPIMEEHPL).

The protein localises to the cell membrane. Potential calcium-dependent cell-adhesion protein. This chain is Protocadherin-11 X-linked (PCDH11X), found in Pongo pygmaeus (Bornean orangutan).